We begin with the raw amino-acid sequence, 196 residues long: Imidazoleglycerol-phosphate dehydratase (196 aa).

This sequence belongs to the imidazoleglycerol-phosphate dehydratase family.

It is found in the cytoplasm. The catalysed reaction is D-erythro-1-(imidazol-4-yl)glycerol 3-phosphate = 3-(imidazol-4-yl)-2-oxopropyl phosphate + H2O. Its pathway is amino-acid biosynthesis; L-histidine biosynthesis; L-histidine from 5-phospho-alpha-D-ribose 1-diphosphate: step 6/9. The protein is Imidazoleglycerol-phosphate dehydratase of Acidiphilium cryptum (strain JF-5).